We begin with the raw amino-acid sequence, 692 residues long: Elongation factor G (692 aa).

Residues 8 to 282 (ENTRNIGIMA…AVIDYLPSPL (275 aa)) form the tr-type G domain. Residues 17-24 (AHIDAGKT), 81-85 (DTPGH), and 135-138 (NKMD) each bind GTP.

It belongs to the TRAFAC class translation factor GTPase superfamily. Classic translation factor GTPase family. EF-G/EF-2 subfamily.

It localises to the cytoplasm. Functionally, catalyzes the GTP-dependent ribosomal translocation step during translation elongation. During this step, the ribosome changes from the pre-translocational (PRE) to the post-translocational (POST) state as the newly formed A-site-bound peptidyl-tRNA and P-site-bound deacylated tRNA move to the P and E sites, respectively. Catalyzes the coordinated movement of the two tRNA molecules, the mRNA and conformational changes in the ribosome. This Bacillus cereus (strain ZK / E33L) protein is Elongation factor G.